We begin with the raw amino-acid sequence, 226 residues long: Leucyl/phenylalanyl-tRNA--protein transferase (226 aa).

The protein belongs to the L/F-transferase family.

Its subcellular location is the cytoplasm. It catalyses the reaction N-terminal L-lysyl-[protein] + L-leucyl-tRNA(Leu) = N-terminal L-leucyl-L-lysyl-[protein] + tRNA(Leu) + H(+). It carries out the reaction N-terminal L-arginyl-[protein] + L-leucyl-tRNA(Leu) = N-terminal L-leucyl-L-arginyl-[protein] + tRNA(Leu) + H(+). The enzyme catalyses L-phenylalanyl-tRNA(Phe) + an N-terminal L-alpha-aminoacyl-[protein] = an N-terminal L-phenylalanyl-L-alpha-aminoacyl-[protein] + tRNA(Phe). Its function is as follows. Functions in the N-end rule pathway of protein degradation where it conjugates Leu, Phe and, less efficiently, Met from aminoacyl-tRNAs to the N-termini of proteins containing an N-terminal arginine or lysine. The sequence is that of Leucyl/phenylalanyl-tRNA--protein transferase from Pseudomonas aeruginosa (strain ATCC 15692 / DSM 22644 / CIP 104116 / JCM 14847 / LMG 12228 / 1C / PRS 101 / PAO1).